Here is a 39-residue protein sequence, read N- to C-terminus: Photosystem II reaction center protein X (39 aa).

Residues 11-31 (SLLWGAIVVVIPLSAALLFIS) form a helical membrane-spanning segment.

The protein belongs to the PsbX family. Type 1 subfamily. In terms of assembly, PSII is composed of 1 copy each of membrane proteins PsbA, PsbB, PsbC, PsbD, PsbE, PsbF, PsbH, PsbI, PsbJ, PsbK, PsbL, PsbM, PsbT, PsbX, PsbY, PsbZ, Psb30/Ycf12, at least 3 peripheral proteins of the oxygen-evolving complex and a large number of cofactors. It forms dimeric complexes.

The protein localises to the plastid. The protein resides in the cyanelle thylakoid membrane. Functionally, involved in the binding and/or turnover of quinones at the Q(B) site of photosystem II (PSII). PSII is a light-driven water plastoquinone oxidoreductase, using light energy to abstract electrons from H(2)O, generating a proton gradient subsequently used for ATP formation. The sequence is that of Photosystem II reaction center protein X from Cyanophora paradoxa.